A 345-amino-acid polypeptide reads, in one-letter code: Nuclear hormone receptor family nhr-176 (345 aa).

The segment at residues 7–82 is a DNA-binding region (nuclear receptor); it reads IQPCLVCGQS…AGMLEKMVFS (76 aa). Residues 10-30 form an NR C4-type zinc finger; the sequence is CLVCGQSSNSILFGAPSCRAC. The NR C4-type; degenerate zinc finger occupies 46-65; it reads NNCLGECSFAKKSMKPCQSC. One can recognise an NR LBD domain in the interval 92–342; the sequence is FEKSILEELE…CPLYAISTNS (251 aa). Positions 331–342 are AF-2; the sequence is SGCPLYAISTNS.

The protein localises to the nucleus. Its function is as follows. Nuclear hormone receptor. Binds to xenobiotic ligand thiabendazole (TBZ), in vitro. Involved in the up-regulation of phase I detoxification genes, such as probable cytochrome P450 cyp-35d1, in response to TBZ. This chain is Nuclear hormone receptor family nhr-176, found in Caenorhabditis elegans.